A 912-amino-acid polypeptide reads, in one-letter code: Accessory gland protein Acp36DE (912 aa).

Residues 1-23 (MWTLTCQQFIALILLGTLVPSES) form the signal peptide. Low complexity-rich tracts occupy residues 193–220 (QSQS…QEQS), 230–255 (SESQ…SQRQ), 271–324 (KSNE…GLQQ), and 521–544 (QSQL…EQLQ). 5 disordered regions span residues 193-255 (QSQS…SQRQ), 271-349 (KSNE…QKQL), 518-544 (TQTQ…EQLQ), 638-671 (PSEG…SGGG), and 732-912 (GQQQ…NLSG). Composition is skewed to low complexity over residues 732–757 (GQQQ…SSSQ) and 765–785 (QSTG…GLQT). The span at 803-818 (RLKEQEQLRIQTENDQ) shows a compositional bias: basic and acidic residues. A compositionally biased stretch (low complexity) spans 821 to 845 (SSSSSHSNSQNSQSSSSQSSQASQS). Polar residues predominate over residues 851-861 (EAGNRNTLLLD). Over residues 862 to 897 (QSSSKTQSESKSESSSQSSSHSSSQSTSNSSSNVQS) the composition is skewed to low complexity. The segment covering 898–912 (KLQGESQALLNNLSG) has biased composition (polar residues).

Proteolytically cleaved by the seminal metalloprotease Semp1. Cleavage appears to take place in the mated female. In terms of tissue distribution, detected in the male accessory glands (at protein level). Produced in the accessory glands and secreted into seminal fluid.

It is found in the secreted. Functionally, responsible for physiological and behavioral changes in mated female flies. Associates with sperm and localizes to specific regions of the female reproductive tract, including the sperm storage organs. It accelerates sperm accumulation into storage but does not mediate the entry of the first sperm into storage. Once sperm storage has initiated it seems to act as a guidance factor helping subsequent sperm move into storage, a corral concentrating sperm around the SSO entrances and/or a trigger for responses within the female that accelerate storage of sperm. The sequence is that of Accessory gland protein Acp36DE (Acp36DE) from Drosophila melanogaster (Fruit fly).